The sequence spans 275 residues: Glutamate racemase (275 aa).

Substrate is bound by residues 12 to 13 and 44 to 45; these read DS and YG. C75 functions as the Proton donor/acceptor in the catalytic mechanism. Substrate is bound at residue 76-77; it reads NT. C185 acts as the Proton donor/acceptor in catalysis. Residue 186 to 187 participates in substrate binding; it reads TH.

Belongs to the aspartate/glutamate racemases family.

The catalysed reaction is L-glutamate = D-glutamate. It functions in the pathway cell wall biogenesis; peptidoglycan biosynthesis. In terms of biological role, provides the (R)-glutamate required for cell wall biosynthesis. In Mycobacterium avium (strain 104), this protein is Glutamate racemase.